Here is a 541-residue protein sequence, read N- to C-terminus: 2-hydroxyacylsphingosine 1-beta-galactosyltransferase (541 aa).

The signal sequence occupies residues 1-20; it reads MKSYTPYFILLWSAVGIAKA. Residues Asn-78, Asn-333, and Asn-442 are each glycosylated (N-linked (GlcNAc...) asparagine). The chain crosses the membrane as a helical span at residues 472–492; the sequence is YFLLDIAFVLLLGAALLYFLL.

Belongs to the UDP-glycosyltransferase family.

It is found in the membrane. The protein resides in the endoplasmic reticulum. It catalyses the reaction an N-acylsphing-4-enine + UDP-alpha-D-galactose = a beta-D-galactosyl-(1&lt;-&gt;1')-N-acylsphing-4-enine + UDP + H(+). The enzyme catalyses an N-acyl-sphingoid base + UDP-alpha-D-galactose = a D-galactosylceramide + UDP + H(+). The catalysed reaction is N-(2-hydroxy-hexanoyl)-sphing-4-enine + UDP-alpha-D-galactose = N-(2-hydroxy-hexanoyl)-beta-D-galactosyl-sphing-4-enine + UDP + H(+). It carries out the reaction N-(2-hydroxy-hexanoyl)-sphinganine + UDP-alpha-D-galactose = N-(2-hydroxyhexanoyl)-beta-D-galactosylsphinganine + UDP + H(+). It participates in sphingolipid metabolism; galactosylceramide biosynthesis. Catalyzes the transfer of galactose to ceramide, a key enzymatic step in the biosynthesis of galactocerebrosides, which are abundant sphingolipids of the myelin membrane of the central nervous system and peripheral nervous system. Galactosylates both hydroxy- and non-hydroxy fatty acid-containing ceramides and diglycerides. The chain is 2-hydroxyacylsphingosine 1-beta-galactosyltransferase from Homo sapiens (Human).